Reading from the N-terminus, the 335-residue chain is uncharacterized protein (335 aa).

This is an uncharacterized protein from Escherichia coli (strain K12).